Reading from the N-terminus, the 828-residue chain is Hapless 2 (828 aa).

Positions 1-32 are cleaved as a signal peptide; that stretch reads MKNKLINLRSKHIYKLIIIIFFCIILKYYKWC. Residues 33–680 lie on the Extracellular side of the membrane; sequence DFKNKVFFIQ…INTVKTLIGK (648 aa). The cysteines at positions 53 and 62 are disulfide-linked. N-linked (GlcNAc...) asparagine glycosylation is present at N74. Intrachain disulfides connect C142-C209, C170-C381, C172-C191, and C363-C388. Residues 174 to 191 form a cd loop; involved in gamete fusion region; sequence TYNYFKDDEFIKRAKLKC. N233, N250, N264, N293, and N333 each carry an N-linked (GlcNAc...) asparagine glycan. N-linked (GlcNAc...) asparagine glycosylation is found at N479, N516, N531, and N539. Cysteines 546 and 592 form a disulfide. The helical transmembrane segment at 681-701 threads the bilayer; sequence FAIIAILIILAPALIPLLPFF. The Cytoplasmic portion of the chain corresponds to 702–828; sequence LNFFFLFIST…SGKSKIPPLR (127 aa). Residues 773 to 828 form a disordered region; it reads RKNKKKFNKNNISSNIKHKKGGKKVKQKEPNRNSNHTSHEYADTSPSGKSKIPPLR. A compositionally biased stretch (basic residues) spans 788 to 798; sequence IKHKKGGKKVK. Positions 799-814 are enriched in basic and acidic residues; that stretch reads QKEPNRNSNHTSHEYA.

It belongs to the HAP2/GCS1 family.

It is found in the cell membrane. In terms of biological role, during fertilization, required on male gametes for their fusion with female gametes, and for subsequent ookinete formation in the host. Thereby, required for mosquito-mediated transmission to other animals. Probably initiates the fusion of gamete cell membranes by inserting part of its extracellular domain into the cell membrane of a female gamete. The protein is Hapless 2 of Plasmodium berghei (strain Anka).